The primary structure comprises 167 residues: UPF0178 protein bll3966 (167 aa).

The protein belongs to the UPF0178 family.

In Bradyrhizobium diazoefficiens (strain JCM 10833 / BCRC 13528 / IAM 13628 / NBRC 14792 / USDA 110), this protein is UPF0178 protein bll3966.